A 1902-amino-acid chain; its full sequence is Rho GTPase-activating protein 21-B (1902 aa).

Disordered regions lie at residues 1 to 44 (MATR…EGFC), 78 to 97 (TSVK…RPRN), 284 to 317 (RTNR…NVPM), 348 to 369 (PAAH…GSHQ), 409 to 450 (NTTD…SQER), 581 to 603 (TRNF…RSGF), 613 to 632 (IPTP…DDGI), and 879 to 902 (KARE…DVFS). Polar residues predominate over residues 10-22 (EQQQEPSSPASEI). In terms of domain architecture, PDZ spans 77–162 (HTSVKDEENG…TLELSVMPKD (86 aa)). The segment covering 305–317 (TTSPSSSTPNVPM) has biased composition (low complexity). Polar residues predominate over residues 409-424 (NTTDYNQMLPNRSSGQ). The 114-residue stretch at 903–1016 (DSNKEGFLYF…WIKAIQENGN (114 aa)) folds into the PH domain. The segment covering 1039 to 1063 (TMMSSSSNKTEPSPKAQRQTLSIRQ) has biased composition (polar residues). The disordered stretch occupies residues 1039–1095 (TMMSSSSNKTEPSPKAQRQTLSIRQQFRAGKPDDDISPPKDKGSWRRIMKKPFEKKP). Over residues 1068 to 1082 (GKPDDDISPPKDKGS) the composition is skewed to basic and acidic residues. The Rho-GAP domain maps to 1103 to 1295 (VRLDDCPPAH…TLIQKHDWFF (193 aa)). Disordered regions lie at residues 1306 to 1357 (TVHE…GSGK), 1375 to 1394 (RKRK…DELD), 1494 to 1520 (MSDS…VSPE), 1559 to 1704 (VQSV…EPAW), 1729 to 1748 (QKAN…RHTL), and 1803 to 1890 (TSTS…KLSG). A compositionally biased stretch (low complexity) spans 1339-1357 (SDSATSDSAKSKGSWGSGK). Positions 1494-1511 (MSDSGTMLSTSSQASVQG) are enriched in polar residues. Basic and acidic residues-rich tracts occupy residues 1575–1585 (SELVSEGRPME) and 1601–1613 (FDRR…EEPS). Residues 1614–1630 (RNVQVNSEGSPSCTEGS) are compositionally biased toward polar residues. 2 stretches are compositionally biased toward basic and acidic residues: residues 1634–1652 (KMDR…DTLS) and 1661–1673 (TDSD…KTEE). Residues 1737–1748 (RKKKNIRRRHTL) show a composition bias toward basic residues. Residues 1865–1878 (NGDSFQSKNKNNFS) are compositionally biased toward polar residues.

The protein resides in the golgi apparatus membrane. It is found in the cell junction. The protein localises to the cytoplasmic vesicle membrane. Its subcellular location is the cytoplasm. It localises to the cytoskeleton. Its function is as follows. GTPase-activating protein (GAP) for rhoa and cdc42. This is Rho GTPase-activating protein 21-B (arhgap21-b) from Xenopus laevis (African clawed frog).